A 614-amino-acid polypeptide reads, in one-letter code: Afadin- and alpha-actinin-binding protein (614 aa).

2 coiled-coil regions span residues 131-227 (MDHL…IAMD) and 266-293 (RQKQILMENAELKKVLQQMKKEMISLLS). A phosphoserine mark is found at S290, S293, and S312. The tract at residues 292-317 (LSPQKKKPRERVDDSTGTVISDVEED) is disordered. Residues 374–460 (ISRQDHEQET…RSFTEAAIRL (87 aa)) adopt a coiled-coil conformation. Residues S536, S540, and S542 each carry the phosphoserine modification.

The protein belongs to the ADIP family. In terms of assembly, interacts with afadin and alpha-actinin. Interacts with VAV2. Interacts with SSX2 and SSX3. Does not interact with SSX1 and SSX4. Interacts with PCM1. Interacts with WRAP73. Widely expressed, with the highest expression in brain, intermediate expression in kidney, testis, spinal cord, liver, heart, lung, skeletal muscle, ovary, fetal liver and fetal brain, and little to no expression in pancreas and spleen. All specific brain regions showed intermediate to high expression, with highest expression in amygdala. Also expressed in fetal tissues, mainly in liver and brain.

The protein resides in the cell junction. It localises to the adherens junction. Its subcellular location is the nucleus. It is found in the cytoplasm. The protein localises to the cytoskeleton. The protein resides in the microtubule organizing center. It localises to the centrosome. Its subcellular location is the centriolar satellite. It is found in the cilium basal body. Its function is as follows. Belongs to an adhesion system, which plays a role in the organization of homotypic, interneuronal and heterotypic cell-cell adherens junctions (AJs). May connect the nectin-afadin and E-cadherin-catenin system through alpha-actinin and may be involved in organization of the actin cytoskeleton at AJs through afadin and alpha-actinin. Involved in cell movement: localizes at the leading edge of moving cells in response to PDGF and is required for the formation of the leading edge and the promotion of cell movement, possibly via activation of Rac signaling. Acts as a centrosome maturation factor, probably by maintaining the integrity of the pericentriolar material and proper microtubule nucleation at mitotic spindle poles. The function seems to implicate at least in part WRAP73; the SSX2IP:WRAP73 complex is proposed to act as regulator of spindle anchoring at the mitotic centrosome. Involved in ciliogenesis. It is required for targeted recruitment of the BBSome, CEP290, RAB8, and SSTR3 to the cilia. The sequence is that of Afadin- and alpha-actinin-binding protein (SSX2IP) from Homo sapiens (Human).